We begin with the raw amino-acid sequence, 37 residues long: KCNTATCATQRLANFLVHSNNNLGPVLSPTNVGSNTY.

Cys-2 and Cys-7 are joined by a disulfide. Tyr-37 carries the post-translational modification Tyrosine amide.

It belongs to the calcitonin family. As to quaternary structure, can form homodimers. Interacts with IDE and INS. Interaction with INS inhibits homodimerization and fibril formation.

It localises to the secreted. Functionally, amylin/IAPP is a glucoregulatory peptide hormone that plays an important role in the regulation of energy homeostasis. Selectively inhibits insulin-stimulated glucose utilization and glycogen deposition in muscle, while not affecting adipocyte glucose metabolism. IAPP function is mediated by the CALCR-RAMPs (AMYRs) receptor complexes. Amylin can also bind CALCR receptor in the absence of RAMPs, although it is more selective for AMYRs. In Cricetulus griseus (Chinese hamster), this protein is Islet amyloid polypeptide (IAPP).